A 221-amino-acid chain; its full sequence is Ribonuclease T (221 aa).

The Exonuclease domain occupies 20-194 (VVIDVETAGF…YDTERTAELF (175 aa)). Positions 23, 25, 181, and 186 each coordinate Mg(2+). Residue histidine 181 is the Proton donor/acceptor of the active site.

It belongs to the RNase T family. In terms of assembly, homodimer. The cofactor is Mg(2+).

In terms of biological role, trims short 3' overhangs of a variety of RNA species, leaving a one or two nucleotide 3' overhang. Responsible for the end-turnover of tRNA: specifically removes the terminal AMP residue from uncharged tRNA (tRNA-C-C-A). Also appears to be involved in tRNA biosynthesis. This is Ribonuclease T from Shewanella frigidimarina (strain NCIMB 400).